The chain runs to 392 residues: Putative RNA-binding protein Luc7-like 2 (392 aa).

Position 18 is a phosphoserine (Ser18). Residues 102–177 are a coiled coil; that stretch reads EVSKKRLAET…EAEEVYRNSM (76 aa). Positions 235 to 257 are enriched in basic and acidic residues; that stretch reads KQEKRNQERLKRREEREREEREK. Residues 235–392 form a disordered region; that stretch reads KQEKRNQERL…SSEEREAGEI (158 aa). The segment covering 258–321 has biased composition (basic residues); that stretch reads LRRSRSHSKN…RSRSHQRSRH (64 aa). A 5-hydroxylysine; by JMJD6 mark is found at Lys266 and Lys269. Basic and acidic residues-rich tracts occupy residues 337-364 and 377-392; these read KERF…DRDR and RSED…AGEI.

This sequence belongs to the Luc7 family. In terms of assembly, interacts with SCNM1. All isoforms are expressed in brain, kidney, heart, thymus, stomach, skeletal muscle, testis and spinal cord.

Its subcellular location is the nucleus speckle. It localises to the nucleus. It is found in the nucleoplasm. In terms of biological role, may bind to RNA via its Arg/Ser-rich domain. The protein is Putative RNA-binding protein Luc7-like 2 (Luc7l2) of Mus musculus (Mouse).